A 153-amino-acid chain; its full sequence is Lipoprotein signal peptidase (153 aa).

3 consecutive transmembrane segments (helical) span residues 6-26, 60-80, and 85-105; these read IVAVIVLLLIGLDQLVKSYIV, QQLLFAVITLVVVIGAIWYLH, and DSFWMVLGLTLIIAGGLGNFI. Residues Asp115 and Asp131 contribute to the active site. Residues 124–144 form a helical membrane-spanning segment; the sequence is FAIFNVADSYLTVGVIILLIA.

Belongs to the peptidase A8 family.

It localises to the cell membrane. The catalysed reaction is Release of signal peptides from bacterial membrane prolipoproteins. Hydrolyzes -Xaa-Yaa-Zaa-|-(S,diacylglyceryl)Cys-, in which Xaa is hydrophobic (preferably Leu), and Yaa (Ala or Ser) and Zaa (Gly or Ala) have small, neutral side chains.. The protein operates within protein modification; lipoprotein biosynthesis (signal peptide cleavage). In terms of biological role, this protein specifically catalyzes the removal of signal peptides from prolipoproteins. This is Lipoprotein signal peptidase from Streptococcus pneumoniae (strain ATCC BAA-255 / R6).